Reading from the N-terminus, the 257-residue chain is Ditrans,polycis-undecaprenyl-diphosphate synthase ((2E,6E)-farnesyl-diphosphate specific) (257 aa).

Residue Asp-23 is part of the active site. Asp-23 provides a ligand contact to Mg(2+). Substrate-binding positions include 24–27 (GNGR), Trp-28, Arg-36, His-40, and 68–70 (SSE). Asn-71 acts as the Proton acceptor in catalysis. Substrate is bound by residues Trp-72, Arg-74, Arg-191, and 197–199 (RIS). Position 210 (Glu-210) interacts with Mg(2+).

This sequence belongs to the UPP synthase family. Homodimer. Requires Mg(2+) as cofactor.

It carries out the reaction 8 isopentenyl diphosphate + (2E,6E)-farnesyl diphosphate = di-trans,octa-cis-undecaprenyl diphosphate + 8 diphosphate. Functionally, catalyzes the sequential condensation of isopentenyl diphosphate (IPP) with (2E,6E)-farnesyl diphosphate (E,E-FPP) to yield (2Z,6Z,10Z,14Z,18Z,22Z,26Z,30Z,34E,38E)-undecaprenyl diphosphate (di-trans,octa-cis-UPP). UPP is the precursor of glycosyl carrier lipid in the biosynthesis of bacterial cell wall polysaccharide components such as peptidoglycan and lipopolysaccharide. In Xanthomonas axonopodis pv. citri (strain 306), this protein is Ditrans,polycis-undecaprenyl-diphosphate synthase ((2E,6E)-farnesyl-diphosphate specific).